Consider the following 252-residue polypeptide: Ribosomal RNA small subunit methyltransferase J (252 aa).

Residues 101–102 (RD), 117–118 (ER), 153–154 (SS), and D171 each bind S-adenosyl-L-methionine.

This sequence belongs to the methyltransferase superfamily. RsmJ family.

The protein localises to the cytoplasm. It carries out the reaction guanosine(1516) in 16S rRNA + S-adenosyl-L-methionine = N(2)-methylguanosine(1516) in 16S rRNA + S-adenosyl-L-homocysteine + H(+). Functionally, specifically methylates the guanosine in position 1516 of 16S rRNA. The chain is Ribosomal RNA small subunit methyltransferase J from Citrobacter koseri (strain ATCC BAA-895 / CDC 4225-83 / SGSC4696).